Consider the following 419-residue polypeptide: UDP-N-acetylglucosamine 1-carboxyvinyltransferase (419 aa).

22–23 (KN) serves as a coordination point for phosphoenolpyruvate. Position 93 (Arg93) interacts with UDP-N-acetyl-alpha-D-glucosamine. Residue Cys117 is the Proton donor of the active site. A 2-(S-cysteinyl)pyruvic acid O-phosphothioketal modification is found at Cys117. Residues Asp306 and Ile328 each coordinate UDP-N-acetyl-alpha-D-glucosamine.

It belongs to the EPSP synthase family. MurA subfamily.

It is found in the cytoplasm. It catalyses the reaction phosphoenolpyruvate + UDP-N-acetyl-alpha-D-glucosamine = UDP-N-acetyl-3-O-(1-carboxyvinyl)-alpha-D-glucosamine + phosphate. It functions in the pathway cell wall biogenesis; peptidoglycan biosynthesis. In terms of biological role, cell wall formation. Adds enolpyruvyl to UDP-N-acetylglucosamine. The protein is UDP-N-acetylglucosamine 1-carboxyvinyltransferase of Magnetococcus marinus (strain ATCC BAA-1437 / JCM 17883 / MC-1).